We begin with the raw amino-acid sequence, 146 residues long: UPF0306 protein HD_1359 (146 aa).

The protein belongs to the UPF0306 family.

This chain is UPF0306 protein HD_1359, found in Haemophilus ducreyi (strain 35000HP / ATCC 700724).